An 801-amino-acid polypeptide reads, in one-letter code: Na(+)/H(+) antiporter subunit A (801 aa).

21 helical membrane passes run 4 to 21 (LHLAILSPFLFAFIIPFL), 28 to 50 (VHTGWFVLILPVLLFIYFLPMIR), 80 to 102 (GLLFALLITGIGSLVTLYSIFYL), 109 to 128 (LGPFYVYLLMFMGAMLGVVL), 132 to 154 (VMVLYMFWELTSLSSFLLIGYWY), 166 to 188 (SLLITVSGGLCMLGGFILLYLIT), 203 to 222 (IAGHELFIPAMILILLGAFT), 229 to 251 (FYIWLPDAMEAPTPVSAYLHSAT), 266 to 288 (IFAFSAQWFWIVSLVGLFTMVWG), 301 to 323 (ILAFSTVSQLGMIISMLGVSAAA), 338 to 360 (AAIFHLINHATFKGSLFMAVGII), 372 to 394 (LGGLMAIMPITFTISLIGTFSMA), 428 to 450 (VLFPLFAWIGSVFTFIYSMKLLF), 471 to 493 (VGMLVPPVILVALAVSLFFFPNI), 526 to 548 (GVTTELLMTAGIVVIGTIGYLSL), 594 to 616 (YLLYIFAGFIILIGGAFAIKGGF), 626 to 647 (IGVYEIILTLVMISATVATVFA), 654 to 671 (IIALGVVGYTLALFFVIF), 676 to 698 (LALTQLVIETISVALFLLCFYHL), 710 to 732 (FRMTNFIISLGVGVIVTLLGIAS), and 772 to 789 (MFEITVLTIAALGIYSMI).

It belongs to the CPA3 antiporters (TC 2.A.63) subunit A family. In terms of assembly, forms a heterooligomeric complex that consists of seven subunits: MrpA, MrpB, MrpC, MrpD, MrpE, MrpF and MrpG.

Its subcellular location is the cell membrane. Mrp complex is a Na(+)/H(+) antiporter that is considered to be the major Na(+) excretion system in B.subtilis. Has a major role in Na(+) resistance and a minor role in Na(+)- and K(+)-dependent pH homeostasis as compared to TetB. MrpA may be the actual Na(+)/H(+) antiporter, although the six other Mrp proteins are all required for Na(+)/H(+) antiport activity and Na(+) resistance. MrpA is required for initiation of sporulation when external Na(+) concentration increases. Also transports Li(+) but not K(+), Ca(2+) or Mg(2+). In Bacillus subtilis (strain 168), this protein is Na(+)/H(+) antiporter subunit A (mrpA).